Reading from the N-terminus, the 892-residue chain is Gamma-tubulin small complex component GCP3 (892 aa).

The protein belongs to the TUBGCP family. As to quaternary structure, component of the gamma-tubulin small complex (gamma-TuSC) composed of tubulin gamma chain, gamma-tubulin complex protein 2 (GCP2) and gamma-tubulin complex protein 3 (GCP3). Interacts with tubulin gamma chain.

The protein resides in the cytoplasm. Its subcellular location is the cytoskeleton. It localises to the flagellum axoneme. The protein localises to the flagellum basal body. Its function is as follows. Component of the gamma-tubulin small complex (gamma-TuSC) involved in microtubule (MT) nucleation for the formation of median bodies and in the biogenesis of flagella. Gamma-TuSC may be required for the correct positioning of EB1 within the trophozoites. The polypeptide is Gamma-tubulin small complex component GCP3 (Giardia intestinalis (strain ATCC 50803 / WB clone C6) (Giardia lamblia)).